The following is a 240-amino-acid chain: Glutathione S-transferase omega-1 (240 aa).

N-acetylserine is present on S2. The 80-residue stretch at 22–101 (GQIRVYSMRF…YLDEAYPEKK (80 aa)) folds into the GST N-terminal domain. Catalysis depends on C32, which acts as the Nucleophile. Position 57 is an N6-acetyllysine (K57). Glutathione-binding positions include K59, V72, and 85-86 (ES). The GST C-terminal domain occupies 106–227 (DPYKKARQKM…AKTYREYLNL (122 aa)). S129 is subject to Phosphoserine. An N6-acetyllysine modification is found at K152.

It belongs to the GST superfamily. Omega family. In terms of assembly, homodimer.

It localises to the cytoplasm. Its subcellular location is the cytosol. The enzyme catalyses RX + glutathione = an S-substituted glutathione + a halide anion + H(+). The catalysed reaction is L-dehydroascorbate + 2 glutathione = glutathione disulfide + L-ascorbate. It carries out the reaction methylarsonate + 2 glutathione + H(+) = methylarsonous acid + glutathione disulfide + H2O. In terms of biological role, exhibits glutathione-dependent thiol transferase and dehydroascorbate reductase activities. Has S-(phenacyl)glutathione reductase activity. Also has glutathione S-transferase activity. Participates in the biotransformation of inorganic arsenic and reduces monomethylarsonic acid (MMA) and dimethylarsonic acid. The protein is Glutathione S-transferase omega-1 (Gsto1) of Mus musculus (Mouse).